Consider the following 186-residue polypeptide: MKMIVGLGNIGTRYDETRHNAGFMVVEQLARDFHLGAFTHEKVEAVTVTGLINGQKVMLVKPTTFMNESGRAVKPLMEYYDIALDDLIVVSDDLDMPVGKIKLKQRGASGGHNGLKSLIDHLGTREFNRVKLGIDHPKFGSVVSHVLGRFDTEERPVFEGAVLQAEQALIKWVQGTSFDQLMNEYN.

Position 14 (Y14) interacts with tRNA. The active-site Proton acceptor is H19. TRNA-binding residues include F65, N67, and N113.

This sequence belongs to the PTH family. Monomer.

It is found in the cytoplasm. The enzyme catalyses an N-acyl-L-alpha-aminoacyl-tRNA + H2O = an N-acyl-L-amino acid + a tRNA + H(+). Hydrolyzes ribosome-free peptidyl-tRNAs (with 1 or more amino acids incorporated), which drop off the ribosome during protein synthesis, or as a result of ribosome stalling. Its function is as follows. Catalyzes the release of premature peptidyl moieties from peptidyl-tRNA molecules trapped in stalled 50S ribosomal subunits, and thus maintains levels of free tRNAs and 50S ribosomes. This is Peptidyl-tRNA hydrolase from Limosilactobacillus fermentum (strain NBRC 3956 / LMG 18251) (Lactobacillus fermentum).